The following is a 262-amino-acid chain: Pyridoxine 5'-phosphate synthase (262 aa).

Residue Asn6 coordinates 3-amino-2-oxopropyl phosphate. 8-9 (DH) is a binding site for 1-deoxy-D-xylulose 5-phosphate. Arg17 contacts 3-amino-2-oxopropyl phosphate. His43 serves as the catalytic Proton acceptor. Residues Arg45 and His50 each coordinate 1-deoxy-D-xylulose 5-phosphate. Glu70 functions as the Proton acceptor in the catalytic mechanism. Thr102 is a binding site for 1-deoxy-D-xylulose 5-phosphate. His215 acts as the Proton donor in catalysis. 3-amino-2-oxopropyl phosphate-binding positions include Gly216 and 237–238 (GH).

Belongs to the PNP synthase family. Homooctamer; tetramer of dimers.

The protein resides in the cytoplasm. It catalyses the reaction 3-amino-2-oxopropyl phosphate + 1-deoxy-D-xylulose 5-phosphate = pyridoxine 5'-phosphate + phosphate + 2 H2O + H(+). Its pathway is cofactor biosynthesis; pyridoxine 5'-phosphate biosynthesis; pyridoxine 5'-phosphate from D-erythrose 4-phosphate: step 5/5. In terms of biological role, catalyzes the complicated ring closure reaction between the two acyclic compounds 1-deoxy-D-xylulose-5-phosphate (DXP) and 3-amino-2-oxopropyl phosphate (1-amino-acetone-3-phosphate or AAP) to form pyridoxine 5'-phosphate (PNP) and inorganic phosphate. This is Pyridoxine 5'-phosphate synthase from Helicobacter pylori (strain Shi470).